A 321-amino-acid polypeptide reads, in one-letter code: Methionyl-tRNA formyltransferase (321 aa).

112–115 (SILP) provides a ligand contact to (6S)-5,6,7,8-tetrahydrofolate.

The protein belongs to the Fmt family.

It carries out the reaction L-methionyl-tRNA(fMet) + (6R)-10-formyltetrahydrofolate = N-formyl-L-methionyl-tRNA(fMet) + (6S)-5,6,7,8-tetrahydrofolate + H(+). Its function is as follows. Attaches a formyl group to the free amino group of methionyl-tRNA(fMet). The formyl group appears to play a dual role in the initiator identity of N-formylmethionyl-tRNA by promoting its recognition by IF2 and preventing the misappropriation of this tRNA by the elongation apparatus. The chain is Methionyl-tRNA formyltransferase from Shewanella piezotolerans (strain WP3 / JCM 13877).